The following is a 599-amino-acid chain: Sulfite reductase [NADPH] flavoprotein alpha-component (599 aa).

A Flavodoxin-like domain is found at 64 to 202; it reads VTLISASQTG…AASEWRARVV (139 aa). Residues 70–75, 117–120, and 153–162 contribute to the FMN site; these read SQTGNA, STQG, and LGDTSYEFFC. One can recognise an FAD-binding FR-type domain in the interval 234–448; that stretch reads DAPLIATLSV…IEHNDNFRLP (215 aa). Residues threonine 322, alanine 356, 386-389, 404-406, tyrosine 410, and 419-422 contribute to the FAD site; these read RLYS, TVG, and GGAS. NADP(+) contacts are provided by residues 519-520, 525-529, and aspartate 561; these read SR and KIYVQ. Tyrosine 599 contributes to the FAD binding site.

It belongs to the NADPH-dependent sulphite reductase flavoprotein subunit CysJ family. In the N-terminal section; belongs to the flavodoxin family. This sequence in the C-terminal section; belongs to the flavoprotein pyridine nucleotide cytochrome reductase family. As to quaternary structure, alpha(8)-beta(8). The alpha component is a flavoprotein, the beta component is a hemoprotein. It depends on FAD as a cofactor. FMN serves as cofactor.

It carries out the reaction hydrogen sulfide + 3 NADP(+) + 3 H2O = sulfite + 3 NADPH + 4 H(+). It participates in sulfur metabolism; hydrogen sulfide biosynthesis; hydrogen sulfide from sulfite (NADPH route): step 1/1. Functionally, component of the sulfite reductase complex that catalyzes the 6-electron reduction of sulfite to sulfide. This is one of several activities required for the biosynthesis of L-cysteine from sulfate. The flavoprotein component catalyzes the electron flow from NADPH -&gt; FAD -&gt; FMN to the hemoprotein component. In Salmonella typhimurium (strain LT2 / SGSC1412 / ATCC 700720), this protein is Sulfite reductase [NADPH] flavoprotein alpha-component.